A 1490-amino-acid chain; its full sequence is MIFSQGSSPLKGDFSKIKFSIASPESILAHSRGEVLKPETINYRTFKPERDGLMCEKIFGPTKDWECYCGKYKRVRYKGIICDRCGVEVTTKSVRRERMGHISLAVPVVHTWFFRSVPSKIGALLDLSTKELERIIYYEVYVVINPGEPGEKQGIKKFDRLTEEQYFQIITEYEDNQDLEDNDPAKFVAKMGGEAIHMLLKGLNLDEIALNLRKVLKESGSEQKRADALKRLKVVEAFRKSYEPQKRTRKKSTGLFPEEDSPELYIYEGNKPEYMVMEVVPVIPPELRPLVPLEGGRFATSDLNDLYRRVIIRNNRLKKLIDIRAPEVILRNEKRMLQEAVDALFDNSRKANAVKTGESNRPLKSLSDALKGKQGRFRQNLLGKRVDYSGRSVIVVGPELKLHQCGLPKSMAIELFQPFVIRRLVERGIAKSVKSAKKLIDKKDPVVWDVLEKVIDGHPVLLNRAPTLHRLGIQAFQPTLIEGKAIQLHPLVCTAFNADFDGDQMAVHVPLSPEAQLEASLLMLSSHNLILPQSGKPVTVPSQDMVLGMYYLTKARFGDVGQGQLFYSMEEVIIAYNEERVGLHAQIFVKYDGKVDQVSDPVRLVDTLVPEEQAERRAWLKSQIEQKKLLVTTVGRVIFNQHMPEEIGFINKLINKKVAKELIAQLSSEVGNVETARFLDNIKEVGFDYAMRGGLSIGLSDAIVPETKVKHIKNAQRDSAKIIKEYNRGTLTDNERYNQIVDVWQKTSNLVADESYEKLKKDRDGFNPLYMMLDSGARGSREQVRQLTGMRGLIARPQKSMSGQPGEIIENPIISNLKEGLTVLEYFISTHGARKGLSDTSLKTADAGYLTRRLHDVAQDVIVTIDDCGTTRGLHVERNIEEETSGQIKFREKIKGRVAARDIVDVINDKVVVKAGEIITDELAAAIQDNIGVEEAEIRSVLTCESKVGICAKCYGTNLSVHKLVEIGEAVGVIAAQSIGEPGTQLTLRTFHQGGAAQGGIAETETKAFYEGQVELEDVKSVEHSIITEDGIEETRQIVIQKNGKLNIIDPDSGKVLKRYVVPHGAHLNVEHGQMVRKEQVLFSSEPNSTQIIAEMPGFAKFIDIEKGVTYKEEVDPQTGFAQHTIINWRSKLRASETREPRVAIVSESGEIRKTYPVPIKSNLYVEDGQKIVPGDIIAKVPRNLDRVGGDITAGLPKVTELFEARIPTDPAIVSEIDGYVSFGSQRRSSKEIRVKNDFGEEKVYYVQVGKHVLATEGDEVKAGDPLTDGAVSPQDILRIQGPNAVQQYLVNEIQKVYQINAGVEINDKHLEVIVRQMLQKVRVEEPGDTDLLPGDLIDRSTFIEANEAVAEKVRVIDRGDAPARIIEGQLYKQRDITKLNRELRRNGKSLITIEPALQATSHPVLLGITSAALQTESVISAASFQETTKVLTDAAVAGKVDHLVGLKENVIVGKLIPAGTGLRKYRSIRLRDNEAEEAEAVEAASDEEI.

4 residues coordinate Zn(2+): Cys67, Cys69, Cys82, and Cys85. Mg(2+) is bound by residues Asp499, Asp501, and Asp503. The Zn(2+) site is built by Cys868, Cys944, Cys951, and Cys954.

Belongs to the RNA polymerase beta' chain family. In terms of assembly, the RNAP catalytic core consists of 2 alpha, 1 beta, 1 beta' and 1 omega subunit. When a sigma factor is associated with the core the holoenzyme is formed, which can initiate transcription. Mg(2+) is required as a cofactor. The cofactor is Zn(2+).

It carries out the reaction RNA(n) + a ribonucleoside 5'-triphosphate = RNA(n+1) + diphosphate. In terms of biological role, DNA-dependent RNA polymerase catalyzes the transcription of DNA into RNA using the four ribonucleoside triphosphates as substrates. This is DNA-directed RNA polymerase subunit beta' from Chlorobaculum tepidum (strain ATCC 49652 / DSM 12025 / NBRC 103806 / TLS) (Chlorobium tepidum).